A 205-amino-acid polypeptide reads, in one-letter code: Putative 3-methyladenine DNA glycosylase (205 aa).

This sequence belongs to the DNA glycosylase MPG family.

The polypeptide is Putative 3-methyladenine DNA glycosylase (Bacillus thuringiensis (strain Al Hakam)).